The primary structure comprises 127 residues: MSKLFFCCLILAGSFCSFRSLPIIVPSKGSLRLSESALDFGDLKSWDDETRLLRNLPMFVDKEAERDAEDIFSKEGFGLDAYNMDDKEELFDKHPRISLLSRLQSKDRKQFKKRAGNLSECFWKYCV.

The N-terminal stretch at 1–16 is a signal peptide; sequence MSKLFFCCLILAGSFC. Positions 17-111 are excised as a propeptide; that stretch reads SFRSLPIIVP…RLQSKDRKQF (95 aa). An intrachain disulfide couples cysteine 121 to cysteine 126.

Belongs to the urotensin-2 family. Central nervous system. Spinal cord.

The protein localises to the secreted. In terms of biological role, involved in smooth muscle stimulating and ion mobilizing activities. It has a suggested role as a corticotropin-releasing factor. This is Urotensin-2 (UTS2) from Pelophylax ridibundus (Marsh frog).